The primary structure comprises 276 residues: Vitamin B12-binding protein (276 aa).

Residues methionine 1–alanine 20 form the signal peptide. One can recognise a Fe/B12 periplasmic-binding domain in the interval arginine 24 to serine 273. A disulfide bond links cysteine 186 and cysteine 262.

The protein belongs to the BtuF family. In terms of assembly, the complex is composed of two ATP-binding proteins (BtuD), two transmembrane proteins (BtuC) and a solute-binding protein (BtuF).

The protein localises to the periplasm. In terms of biological role, part of the ABC transporter complex BtuCDF involved in vitamin B12 import. Binds vitamin B12 and delivers it to the periplasmic surface of BtuC. The protein is Vitamin B12-binding protein of Pectobacterium carotovorum subsp. carotovorum (strain PC1).